The primary structure comprises 187 residues: UPF0301 protein ESA_00394 (187 aa).

This sequence belongs to the UPF0301 (AlgH) family.

The sequence is that of UPF0301 protein ESA_00394 from Cronobacter sakazakii (strain ATCC BAA-894) (Enterobacter sakazakii).